A 248-amino-acid polypeptide reads, in one-letter code: Meiotically up-regulated gene 110 protein (248 aa).

A helical transmembrane segment spans residues 23 to 43; sequence LRFVFWFSVLIPIFFIALIII.

It is found in the membrane. In terms of biological role, has a role in meiosis. This Schizosaccharomyces pombe (strain 972 / ATCC 24843) (Fission yeast) protein is Meiotically up-regulated gene 110 protein (mug110).